We begin with the raw amino-acid sequence, 473 residues long: MNNRELINRYLGKTADQPIYYALFHKVGKIKQILNFDLNVFLKLLLKNRDRFLRENKQPTAEIKRRLTHYFTKQHRVRKVGKILSIVEFQHVIVTTFTRVLGVLTIDNRRVSKMYSSTAILDYAAHEDYVEAMLRSYRVTDGAGPPKGRNKVSDLVGYVISMLKEYLKRHNKSAFCHGSYSLHLLNPAIEYGDIDMLQTNSRTFLINLAFLIYCNTGRVTTMMKIPYLLNYIVMFDEEQAHIVDSFQVSQEIFDRIPKILINDIYIIDPCVQLLNGIKMFSQVDRLDDLHTKFEKLRARFCTLLEYVLYDYDMRIGEGSGAGALRRSRFAYSERVATVEAGALGEDLSPARWVAFMDNAALDARIGASTRQAADFGPVTNSRFLEEDGCLYGYFSNTLLLTPDGAPHPVSCNALAAHFLMYFVMTGAPCKPQLACLLNSLVVPEAREFTLVPRDKKLGDHVILSIDHDVFIDF.

Catalysis depends on residues D193 and D195.

This sequence belongs to the poxviridae poly(A) polymerase catalytic subunit family. Heterodimer of a large (catalytic) subunit and a small (regulatory) subunit.

It catalyses the reaction RNA(n) + ATP = RNA(n)-3'-adenine ribonucleotide + diphosphate. Functionally, polymerase that creates the 3'-poly(A) tail of mRNA's. This chain is Poly(A) polymerase catalytic subunit (PAPL), found in Crocodylus johnstoni (Australian freshwater crocodile).